Consider the following 66-residue polypeptide: Putative alpha-neurotoxin RjAa44 (66 aa).

One can recognise an LCN-type CS-alpha/beta domain in the interval 1-60; that stretch reads KEGYPVDWGNCKYECMSDAYCKDLCADRKAKSGYCYKLNWSCYCEGLPDDSPIKTNGHCR. Intrachain disulfides connect cysteine 11–cysteine 59, cysteine 15–cysteine 35, cysteine 21–cysteine 42, and cysteine 25–cysteine 44.

This sequence belongs to the long (4 C-C) scorpion toxin superfamily. Sodium channel inhibitor family. Alpha subfamily. Expressed by the venom gland.

The protein resides in the secreted. Functionally, alpha toxins bind voltage-independently at site-3 of sodium channels (Nav) and inhibit the inactivation of the activated channels, thereby blocking neuronal transmission. The protein is Putative alpha-neurotoxin RjAa44 of Rhopalurus junceus (Caribbean blue scorpion).